Reading from the N-terminus, the 395-residue chain is Thyroid hormone receptor beta (395 aa).

The tract at residues 1 to 31 (MSEQADKCNSRWKDEAMQNGYIPSYLDKDEL) is modulating. Residues 29–106 (DELCVVCGDK…VGMATDLVLD (78 aa)) constitute a DNA-binding region (nuclear receptor). 8 residues coordinate Zn(2+): C32, C35, C49, C52, C70, C76, C86, and C89. NR C4-type zinc fingers lie at residues 32–52 (CVVC…CEGC) and 70–89 (CKYE…CQEC). Residues 142–395 (EEWEMIRVVT…PPLFLEVFED (254 aa)) enclose the NR LBD domain. R216, N265, and H369 together coordinate 3,3',5-triiodo-L-thyronine.

This sequence belongs to the nuclear hormone receptor family. NR1 subfamily. In terms of assembly, interacts (via the ligand-binding domain) with ncoa2. Widely expressed in a range of adult tissues including the brain, eye, fin, gill, intestine, liver, swim bladder and ovary. In the eye, expressed in the outer nuclear layer of the retina.

It localises to the nucleus. Functionally, nuclear hormone receptor that can act as a repressor or activator of transcription. High affinity receptor for the thyroid gland hormone triiodothyronine (T3). Transactivating activity is ligand-dependent, and is repressed in the absence of T3. In Danio rerio (Zebrafish), this protein is Thyroid hormone receptor beta (thrb).